We begin with the raw amino-acid sequence, 227 residues long: Basic leucine zipper 24 (227 aa).

The tract at residues 44–68 (EDKDQDRVTRGCSHTHSCNPPGPED) is disordered. Positions 94–160 (DSSNKKRLCG…IRLRALLVEM (67 aa)) constitute a bZIP domain. The segment at 98–118 (KKRLCGNREAVRKYREKKKAR) is basic motif. The segment at 122–129 (LEDEVMRL) is leucine-zipper.

In terms of assembly, homodimer. In terms of tissue distribution, expressed in young leaves and cauline leaves.

It is found in the nucleus. It localises to the cytoplasm. Its function is as follows. Transcription factor involved in the regulation of salt stress response. Functions as a negative transcriptional regulator of salt stress acclimation response by regulating cation homeostasis. Negatively regulates the expression of genes contributing to ion and osmotic homeostasis during salt stress, such as the Na(+) transporter HKT1, the Na(+)/H(+) antiporter SOS1, the aquaporin PIP2-1 and the glutamine synthetase GLN1-3. In addition, targets genes with functions in plant growth and development, such as argonaute 4 (AGO4) and cyclophilin 19 (CYP19). This Arabidopsis thaliana (Mouse-ear cress) protein is Basic leucine zipper 24.